A 291-amino-acid polypeptide reads, in one-letter code: ATP synthase gamma chain (291 aa).

It belongs to the ATPase gamma chain family. As to quaternary structure, F-type ATPases have 2 components, CF(1) - the catalytic core - and CF(0) - the membrane proton channel. CF(1) has five subunits: alpha(3), beta(3), gamma(1), delta(1), epsilon(1). CF(0) has three main subunits: a, b and c.

It is found in the cell inner membrane. Functionally, produces ATP from ADP in the presence of a proton gradient across the membrane. The gamma chain is believed to be important in regulating ATPase activity and the flow of protons through the CF(0) complex. This chain is ATP synthase gamma chain, found in Verminephrobacter eiseniae (strain EF01-2).